Consider the following 492-residue polypeptide: N-succinylglutamate 5-semialdehyde dehydrogenase (492 aa).

220–225 (GSANTG) is a binding site for NAD(+). Residues E243 and C277 contribute to the active site.

Belongs to the aldehyde dehydrogenase family. AstD subfamily.

It carries out the reaction N-succinyl-L-glutamate 5-semialdehyde + NAD(+) + H2O = N-succinyl-L-glutamate + NADH + 2 H(+). The protein operates within amino-acid degradation; L-arginine degradation via AST pathway; L-glutamate and succinate from L-arginine: step 4/5. Catalyzes the NAD-dependent reduction of succinylglutamate semialdehyde into succinylglutamate. The sequence is that of N-succinylglutamate 5-semialdehyde dehydrogenase from Shigella flexneri serotype 5b (strain 8401).